A 450-amino-acid polypeptide reads, in one-letter code: tRNA modification GTPase MnmE (450 aa).

The (6S)-5-formyl-5,6,7,8-tetrahydrofolate site is built by arginine 23, glutamate 80, and arginine 123. A TrmE-type G domain is found at 219–372 (GLHVVLAGKP…LRQRLLQLAG (154 aa)). A K(+)-binding site is contributed by asparagine 229. GTP-binding positions include 229-234 (NVGKSS), 248-254 (TPIAGTT), 273-276 (DTAG), and 353-355 (SAR). Serine 233 is a binding site for Mg(2+). Residues threonine 248, isoleucine 250, and threonine 253 each contribute to the K(+) site. A Mg(2+)-binding site is contributed by threonine 254. Position 450 (lysine 450) interacts with (6S)-5-formyl-5,6,7,8-tetrahydrofolate.

This sequence belongs to the TRAFAC class TrmE-Era-EngA-EngB-Septin-like GTPase superfamily. TrmE GTPase family. In terms of assembly, homodimer. Heterotetramer of two MnmE and two MnmG subunits. It depends on K(+) as a cofactor.

Its subcellular location is the cytoplasm. In terms of biological role, exhibits a very high intrinsic GTPase hydrolysis rate. Involved in the addition of a carboxymethylaminomethyl (cmnm) group at the wobble position (U34) of certain tRNAs, forming tRNA-cmnm(5)s(2)U34. The sequence is that of tRNA modification GTPase MnmE from Bordetella bronchiseptica (strain ATCC BAA-588 / NCTC 13252 / RB50) (Alcaligenes bronchisepticus).